Consider the following 419-residue polypeptide: UDP-N-acetylglucosamine 1-carboxyvinyltransferase (419 aa).

22-23 (KN) is a binding site for phosphoenolpyruvate. A UDP-N-acetyl-alpha-D-glucosamine-binding site is contributed by Arg-91. Residue Cys-115 is the Proton donor of the active site. 2-(S-cysteinyl)pyruvic acid O-phosphothioketal is present on Cys-115. UDP-N-acetyl-alpha-D-glucosamine contacts are provided by residues 120-124 (RPVDL), 160-163 (KVSV), Asp-305, and Val-327.

The protein belongs to the EPSP synthase family. MurA subfamily.

It is found in the cytoplasm. It carries out the reaction phosphoenolpyruvate + UDP-N-acetyl-alpha-D-glucosamine = UDP-N-acetyl-3-O-(1-carboxyvinyl)-alpha-D-glucosamine + phosphate. It participates in cell wall biogenesis; peptidoglycan biosynthesis. Cell wall formation. Adds enolpyruvyl to UDP-N-acetylglucosamine. The polypeptide is UDP-N-acetylglucosamine 1-carboxyvinyltransferase (Shigella dysenteriae serotype 1 (strain Sd197)).